Reading from the N-terminus, the 36-residue chain is Potassium channel toxin alpha-KTx 23.1 (36 aa).

4 cysteine pairs are disulfide-bonded: Cys6–Cys26, Cys12–Cys31, Cys16–Cys33, and Cys21–Cys36. Cys36 bears the Cysteine amide mark.

Belongs to the short scorpion toxin superfamily. Potassium channel inhibitor family. Alpha-KTx 23 subfamily. In terms of tissue distribution, expressed by the venom gland.

It is found in the secreted. Functionally, voltage-gated potassium channel inhibitor. Selectively and irreversibly binds (K(d)=2.9 pM) and blocks hKv1.3/KCNA3 potassium channels of human T-lymphocytes. Weakly blocks hKCa3.1/KCNN4, mKv1.1/KCNA1, and hKv1.2/KCNA2 channels. In vivo, high doses (200 ug) produce no symptoms of intoxication when injected into mice. This chain is Potassium channel toxin alpha-KTx 23.1, found in Vaejovis mexicanus smithi (Mexican scorpion).